The chain runs to 1214 residues: NBPF family member NBPF1 (1214 aa).

Positions 70 to 128 (MLRNERQFKEEKLAEQLKQAEELRQYKVLVHSQERELTQLREKLREGRDASRSLNQHLQ) form a coiled coil. A disordered region spans residues 162 to 200 (LSPENDEDEDEDVQVEEAEKVLESSAPREVQKAEESKVP). Residues 165–177 (ENDEDEDEDVQVE) show a composition bias toward acidic residues. The Olduvai 1 domain occupies 165-259 (ENDEDEDEDV…ECQDAVNILP (95 aa)). Positions 190–200 (EVQKAEESKVP) are enriched in basic and acidic residues. Residues 292 to 399 (NEKLHPQLAE…ASRSLNQHLQ (108 aa)) are a coiled coil. The interval 433–471 (LSPENDEDEDEDVQVEEAEKVLESSAPREVQKAEESKVP) is disordered. Positions 436-448 (ENDEDEDEDVQVE) are enriched in acidic residues. The Olduvai 2 domain occupies 436–530 (ENDEDEDEDV…ECQDAVNILP (95 aa)). Residues 461–471 (EVQKAEESKVP) show a composition bias toward basic and acidic residues. Residues 610-670 (KSMLRNERQF…ASCSLNQHLQ (61 aa)) are a coiled coil. 6 Olduvai domains span residues 707 to 799 (ENDN…HIIP), 800 to 888 (ENES…ATGP), 891 to 946 (SREL…LDMD), 947 to 1038 (EIEK…PPCP), 1041 to 1114 (SREL…RSTK), and 1116 to 1214 (RRRR…IFPQ). Disordered regions lie at residues 722 to 746 (EKVQ…EDSL) and 791 to 837 (WEDA…EGYS). 2 stretches are compositionally biased toward acidic residues: residues 801 to 810 (NESDDEEEEE) and 821 to 833 (ESEE…ESWD). The segment covering 1102–1121 (GKGKKRRGRRSTKKRRRRGR) has biased composition (basic residues). Positions 1102–1136 (GKGKKRRGRRSTKKRRRRGRKEGEEDQNPPCPRLS) are disordered.

It belongs to the NBPF family. As to expression, widely expressed. The only tissue which shows a weak expression is kidney.

It is found in the cytoplasm. In Homo sapiens (Human), this protein is NBPF family member NBPF1.